Reading from the N-terminus, the 419-residue chain is CinA-like protein (419 aa).

Belongs to the CinA family.

This is CinA-like protein from Leptospira borgpetersenii serovar Hardjo-bovis (strain JB197).